Here is a 484-residue protein sequence, read N- to C-terminus: Cathepsin F (484 aa).

The N-terminal stretch at 1-19 (MAPWLQLLSLLGLLPGAVA) is a signal peptide. Residues 20-270 (APAQPRAASF…MKQAKSVGDL (251 aa)) constitute a propeptide, activation peptide. 2 N-linked (GlcNAc...) asparagine glycosylation sites follow: N160 and N195. Cystine bridges form between C292-C333 and C326-C366. C295 is an active-site residue. N-linked (GlcNAc...) asparagine glycosylation is found at N367 and N378. An intrachain disulfide couples C424 to C472. Residue H431 is part of the active site. N-linked (GlcNAc...) asparagine glycosylation occurs at N440. The active site involves N451.

It belongs to the peptidase C1 family. As to expression, high expression levels in heart, skeletal muscle, brain, testis and ovary; moderate levels in prostate, placenta, liver and colon; and no detectable expression in peripheral leukocytes and thymus.

Its subcellular location is the lysosome. The enzyme catalyses The recombinant enzyme cleaves synthetic substrates with Phe and Leu (better than Val) in P2, with high specificity constant (kcat/Km) comparable to that of cathepsin L.. Its function is as follows. Thiol protease which is believed to participate in intracellular degradation and turnover of proteins. Has also been implicated in tumor invasion and metastasis. The sequence is that of Cathepsin F (CTSF) from Homo sapiens (Human).